A 69-amino-acid polypeptide reads, in one-letter code: Sodium channel toxin (69 aa).

The 65-residue stretch at 2–66 (KNDYPVDTAK…SPTKTSGRCN (65 aa)) folds into the LCN-type CS-alpha/beta domain. Intrachain disulfides connect Cys14–Cys65, Cys18–Cys41, Cys27–Cys48, and Cys31–Cys50.

The protein belongs to the long (4 C-C) scorpion toxin superfamily. Sodium channel inhibitor family. As to expression, expressed by the venom gland.

It localises to the secreted. Inhibits voltage-gated sodium channels (Nav). In Tityus metuendus (Scorpion), this protein is Sodium channel toxin.